The primary structure comprises 469 residues: Probable monogalactosyldiacylglycerol synthase 2, chloroplastic (469 aa).

The transit peptide at 1–42 directs the protein to the chloroplast; sequence MVISVATPRRSIRDAVLGGVLGAGGRQLYQPLRCAFYDGAAG.

The protein belongs to the glycosyltransferase 28 family.

The protein resides in the plastid. The protein localises to the chloroplast membrane. The catalysed reaction is a 1,2-diacyl-sn-glycerol + UDP-alpha-D-galactose = a 1,2-diacyl-3-O-(beta-D-galactosyl)-sn-glycerol + UDP + H(+). Functionally, involved in the synthesis of the major structural component of photosynthetic membranes. The protein is Probable monogalactosyldiacylglycerol synthase 2, chloroplastic (MGD2) of Oryza sativa subsp. indica (Rice).